The chain runs to 342 residues: N-acetyl-gamma-glutamyl-phosphate reductase (342 aa).

The active site involves Cys149.

It belongs to the NAGSA dehydrogenase family. Type 1 subfamily.

Its subcellular location is the cytoplasm. It catalyses the reaction N-acetyl-L-glutamate 5-semialdehyde + phosphate + NADP(+) = N-acetyl-L-glutamyl 5-phosphate + NADPH + H(+). It functions in the pathway amino-acid biosynthesis; L-arginine biosynthesis; N(2)-acetyl-L-ornithine from L-glutamate: step 3/4. In terms of biological role, catalyzes the NADPH-dependent reduction of N-acetyl-5-glutamyl phosphate to yield N-acetyl-L-glutamate 5-semialdehyde. The chain is N-acetyl-gamma-glutamyl-phosphate reductase from Nitrosomonas eutropha (strain DSM 101675 / C91 / Nm57).